The primary structure comprises 266 residues: Large ribosomal subunit protein uL4 (266 aa).

Belongs to the universal ribosomal protein uL4 family. In terms of assembly, part of the 50S ribosomal subunit.

Functionally, one of the primary rRNA binding proteins, this protein initially binds near the 5'-end of the 23S rRNA. It is important during the early stages of 50S assembly. It makes multiple contacts with different domains of the 23S rRNA in the assembled 50S subunit and ribosome. Its function is as follows. Forms part of the polypeptide exit tunnel. This chain is Large ribosomal subunit protein uL4, found in Sulfurisphaera tokodaii (strain DSM 16993 / JCM 10545 / NBRC 100140 / 7) (Sulfolobus tokodaii).